The sequence spans 269 residues: Putative pyruvate, phosphate dikinase regulatory protein (269 aa).

Residue 147–154 coordinates ADP; the sequence is GVSRSSKT.

This sequence belongs to the pyruvate, phosphate/water dikinase regulatory protein family. PDRP subfamily.

The catalysed reaction is N(tele)-phospho-L-histidyl/L-threonyl-[pyruvate, phosphate dikinase] + ADP = N(tele)-phospho-L-histidyl/O-phospho-L-threonyl-[pyruvate, phosphate dikinase] + AMP + H(+). It catalyses the reaction N(tele)-phospho-L-histidyl/O-phospho-L-threonyl-[pyruvate, phosphate dikinase] + phosphate + H(+) = N(tele)-phospho-L-histidyl/L-threonyl-[pyruvate, phosphate dikinase] + diphosphate. Bifunctional serine/threonine kinase and phosphorylase involved in the regulation of the pyruvate, phosphate dikinase (PPDK) by catalyzing its phosphorylation/dephosphorylation. This Trichlorobacter lovleyi (strain ATCC BAA-1151 / DSM 17278 / SZ) (Geobacter lovleyi) protein is Putative pyruvate, phosphate dikinase regulatory protein.